A 389-amino-acid polypeptide reads, in one-letter code: Chalcone synthase (389 aa).

Cys-164 is an active-site residue.

Belongs to the thiolase-like superfamily. Chalcone/stilbene synthases family.

It carries out the reaction (E)-4-coumaroyl-CoA + 3 malonyl-CoA + 3 H(+) = 2',4,4',6'-tetrahydroxychalcone + 3 CO2 + 4 CoA. It participates in secondary metabolite biosynthesis; flavonoid biosynthesis. In terms of biological role, the primary product of this enzyme is 4,2',4',6'-tetrahydroxychalcone (also termed naringenin-chalcone or chalcone) which can under specific conditions spontaneously isomerize into naringenin. The protein is Chalcone synthase (CHS) of Hydrangea macrophylla (Bigleaf hydrangea).